We begin with the raw amino-acid sequence, 217 residues long: MNQSLLTPFGTAIERVEAALTSLRQGQGVLVVDDEDRENEGDLIYSAQSLTNEQMALLIRECSGIVCLCLTDERIKQLDLPPMVEDNSSQYGTAFTVSIEAKVGVTTGVSAADRVTTIKAAIADNAVPEDLARPGHVYPLRAQSGGVFSRRGHTEGTIDLMLLAGLKPAGVLCEITNPDGTMARLPEIIQFGQQHNLPVLTIEDIVEYRKVTMEKAS.

D-ribulose 5-phosphate is bound by residues 37 to 38 (RE), aspartate 42, 150 to 154 (RRGHT), and glutamate 174. Mg(2+) is bound at residue glutamate 38. A Mg(2+)-binding site is contributed by histidine 153.

Belongs to the DHBP synthase family. Homodimer. It depends on Mg(2+) as a cofactor. The cofactor is Mn(2+).

The enzyme catalyses D-ribulose 5-phosphate = (2S)-2-hydroxy-3-oxobutyl phosphate + formate + H(+). It participates in cofactor biosynthesis; riboflavin biosynthesis; 2-hydroxy-3-oxobutyl phosphate from D-ribulose 5-phosphate: step 1/1. Catalyzes the conversion of D-ribulose 5-phosphate to formate and 3,4-dihydroxy-2-butanone 4-phosphate. This Shewanella woodyi (strain ATCC 51908 / MS32) protein is 3,4-dihydroxy-2-butanone 4-phosphate synthase.